The primary structure comprises 104 residues: NADH-ubiquinone oxidoreductase 12 kDa subunit, mitochondrial (104 aa).

It belongs to the complex I NDUFS6 subunit family. In terms of assembly, complex I is composed of about 40 different subunits.

It is found in the mitochondrion inner membrane. Accessory subunit of the mitochondrial membrane respiratory chain NADH dehydrogenase (Complex I), that is believed not to be involved in catalysis. Complex I functions in the transfer of electrons from NADH to the respiratory chain. The immediate electron acceptor for the enzyme is believed to be ubiquinone. The sequence is that of NADH-ubiquinone oxidoreductase 12 kDa subunit, mitochondrial (nuo-12.3) from Neurospora crassa (strain ATCC 24698 / 74-OR23-1A / CBS 708.71 / DSM 1257 / FGSC 987).